We begin with the raw amino-acid sequence, 174 residues long: Large ribosomal subunit protein bL17 (174 aa).

This sequence belongs to the bacterial ribosomal protein bL17 family. In terms of assembly, part of the 50S ribosomal subunit. Contacts protein L32.

This Acetivibrio thermocellus (strain ATCC 27405 / DSM 1237 / JCM 9322 / NBRC 103400 / NCIMB 10682 / NRRL B-4536 / VPI 7372) (Clostridium thermocellum) protein is Large ribosomal subunit protein bL17.